The primary structure comprises 389 residues: S-adenosylmethionine synthase (389 aa).

Residue His18 coordinates ATP. Asp20 serves as a coordination point for Mg(2+). Glu46 contributes to the K(+) binding site. L-methionine contacts are provided by Glu59 and Gln103. Positions 103–113 are flexible loop; sequence QSADIAMGVDS. Residues 168–170, Asp244, 250–251, Ala267, and Lys271 contribute to the ATP site; these read DSK and RK. Asp244 contributes to the L-methionine binding site. Lys275 provides a ligand contact to L-methionine.

It belongs to the AdoMet synthase family. Homotetramer; dimer of dimers. It depends on Mg(2+) as a cofactor. K(+) is required as a cofactor.

The protein localises to the cytoplasm. The catalysed reaction is L-methionine + ATP + H2O = S-adenosyl-L-methionine + phosphate + diphosphate. It participates in amino-acid biosynthesis; S-adenosyl-L-methionine biosynthesis; S-adenosyl-L-methionine from L-methionine: step 1/1. Functionally, catalyzes the formation of S-adenosylmethionine (AdoMet) from methionine and ATP. The overall synthetic reaction is composed of two sequential steps, AdoMet formation and the subsequent tripolyphosphate hydrolysis which occurs prior to release of AdoMet from the enzyme. The polypeptide is S-adenosylmethionine synthase (Pelagibacter ubique (strain HTCC1062)).